The sequence spans 450 residues: Salicylate synthase (450 aa).

Glu252 (proton donor) is an active-site residue. Position 270–271 (270–271) interacts with substrate; that stretch reads GT. Glu297 contributes to the Mg(2+) binding site. Residues Tyr385, Arg405, and 419–421 each bind substrate; that span reads GAG. Residues Glu431 and Glu434 each contribute to the Mg(2+) site. Lys438 is a binding site for substrate.

Belongs to the anthranilate synthase component I family. Salicylate synthase subfamily. In terms of assembly, monomer. Mg(2+) is required as a cofactor.

It carries out the reaction chorismate = isochorismate. The catalysed reaction is isochorismate = salicylate + pyruvate. The enzyme catalyses chorismate = prephenate. The protein operates within siderophore biosynthesis; mycobactin biosynthesis. Its function is as follows. Involved in the incorporation of salicylate into the virulence-conferring salicylate-based siderophore mycobactin. Catalyzes the initial conversion of chorismate to yield the intermediate isochorismate (isochorismate synthase activity), and the subsequent elimination of the enolpyruvyl side chain in a lyase reaction to give salicylate (isochorismate pyruvate-lyase activity). In the absence of magnesium, MbtI displays a chorismate mutase activity and converts chorismate to prephenate. This chain is Salicylate synthase (mbtI), found in Mycobacterium bovis (strain ATCC BAA-935 / AF2122/97).